Here is a 314-residue protein sequence, read N- to C-terminus: Lipoyl synthase (314 aa).

[4Fe-4S] cluster contacts are provided by Cys61, Cys66, Cys72, Cys87, Cys91, Cys94, and Ser301. Positions Phe73–Ser290 constitute a Radical SAM core domain.

Belongs to the radical SAM superfamily. Lipoyl synthase family. Requires [4Fe-4S] cluster as cofactor.

It is found in the cytoplasm. The enzyme catalyses [[Fe-S] cluster scaffold protein carrying a second [4Fe-4S](2+) cluster] + N(6)-octanoyl-L-lysyl-[protein] + 2 oxidized [2Fe-2S]-[ferredoxin] + 2 S-adenosyl-L-methionine + 4 H(+) = [[Fe-S] cluster scaffold protein] + N(6)-[(R)-dihydrolipoyl]-L-lysyl-[protein] + 4 Fe(3+) + 2 hydrogen sulfide + 2 5'-deoxyadenosine + 2 L-methionine + 2 reduced [2Fe-2S]-[ferredoxin]. The protein operates within protein modification; protein lipoylation via endogenous pathway; protein N(6)-(lipoyl)lysine from octanoyl-[acyl-carrier-protein]: step 2/2. In terms of biological role, catalyzes the radical-mediated insertion of two sulfur atoms into the C-6 and C-8 positions of the octanoyl moiety bound to the lipoyl domains of lipoate-dependent enzymes, thereby converting the octanoylated domains into lipoylated derivatives. This chain is Lipoyl synthase, found in Dechloromonas aromatica (strain RCB).